The chain runs to 629 residues: tRNA uridine 5-carboxymethylaminomethyl modification enzyme MnmG (629 aa).

Residues 15-20 (GAGHAG), valine 127, and serine 182 contribute to the FAD site. The segment at 203–227 (TPPRVKSSTIDYSKTEEQPGDDHPR) is disordered. A compositionally biased stretch (basic and acidic residues) spans 215–227 (SKTEEQPGDDHPR). 274–288 (GARYCPSIEDKIVRF) is an NAD(+) binding site. Residue glutamine 371 participates in FAD binding.

The protein belongs to the MnmG family. As to quaternary structure, homodimer. Heterotetramer of two MnmE and two MnmG subunits. The cofactor is FAD.

The protein resides in the cytoplasm. Its function is as follows. NAD-binding protein involved in the addition of a carboxymethylaminomethyl (cmnm) group at the wobble position (U34) of certain tRNAs, forming tRNA-cmnm(5)s(2)U34. This chain is tRNA uridine 5-carboxymethylaminomethyl modification enzyme MnmG, found in Listeria welshimeri serovar 6b (strain ATCC 35897 / DSM 20650 / CCUG 15529 / CIP 8149 / NCTC 11857 / SLCC 5334 / V8).